Consider the following 196-residue polypeptide: Beta-crystallin A4 (196 aa).

Thr-2 is modified (N-acetylthreonine). Residues 2-11 (TLQCTKSAGH) form an N-terminal arm region. 2 Beta/gamma crystallin 'Greek key' domains span residues 12-51 (WRVV…KVLS) and 52-98 (GAWV…RPVA). The connecting peptide stretch occupies residues 99-104 (CANHRD). 2 consecutive Beta/gamma crystallin 'Greek key' domains span residues 105-146 (SRLT…HVQS) and 147-195 (GAWV…RRIQ).

As to quaternary structure, homo/heterodimer, or complexes of higher-order. The structure of beta-crystallin oligomers seems to be stabilized through interactions between the N-terminal arms.

Its function is as follows. Crystallins are the dominant structural components of the vertebrate eye lens. This Rattus norvegicus (Rat) protein is Beta-crystallin A4 (Cryba4).